We begin with the raw amino-acid sequence, 463 residues long: Probable transport protein HsrA (463 aa).

14 consecutive transmembrane segments (helical) span residues 10-30 (GLAWVAAMALFMQSLDATILN), 49-69 (MAIIAYSLAVALFIPLTAWAA), 82-102 (VFTFILGSVACAAASNLESLI), 107-127 (IQGIGGAFMMPVARLAIIQAV), 139-159 (MATAGLIGPILGPILGGWLVI), 165-185 (WIFLINIPIGALGILASGSVM), 197-217 (WTGFLLFALGLVGITLGLDLL), 225-245 (SVTYSILVVGILLLVTYCGYA), 267-287 (IIANIFIRLSASGVPFLLPLM), 298-318 (MSGWLLAPIALISVMLKILIG), 328-348 (TTLISSALLMAGSVISMAWLD), 354-374 (TWIICNLMWYGACMSIIFTSI), 393-413 (VLSIVQQVGIGFGIAVSSIIL), and 429-449 (AFSYTFLTSSLFVIALVWSLM).

Belongs to the major facilitator superfamily. EmrB family.

The protein resides in the cell inner membrane. The protein is Probable transport protein HsrA (hsrA) of Haemophilus influenzae (strain ATCC 51907 / DSM 11121 / KW20 / Rd).